We begin with the raw amino-acid sequence, 149 residues long: GATA transcription factor 15 (149 aa).

Residues 1-10 (MLDPTEKVID) show a composition bias toward basic and acidic residues. Disordered stretches follow at residues 1-41 (MLDP…NEKK) and 76-102 (RRTLISNRSEDKKKKSHNRNPKFGDSL). The GATA-type zinc finger occupies 37–91 (SNEKKSCAICGTSKTPLWRGGPAGPKSLCNACGIRNRKKRRTLISNRSEDKKKKS).

The protein belongs to the type IV zinc-finger family. Class B subfamily.

The protein resides in the nucleus. In terms of biological role, transcriptional regulator that specifically binds 5'-GATA-3' or 5'-GAT-3' motifs within gene promoters. The chain is GATA transcription factor 15 (GATA15) from Arabidopsis thaliana (Mouse-ear cress).